A 209-amino-acid chain; its full sequence is FMN-dependent NADH:quinone oxidoreductase (209 aa).

FMN contacts are provided by residues Ser-9, 19–21 (SVS), and 143–146 (TRGG).

It belongs to the azoreductase type 1 family. In terms of assembly, homodimer. The cofactor is FMN.

The enzyme catalyses 2 a quinone + NADH + H(+) = 2 a 1,4-benzosemiquinone + NAD(+). It carries out the reaction N,N-dimethyl-1,4-phenylenediamine + anthranilate + 2 NAD(+) = 2-(4-dimethylaminophenyl)diazenylbenzoate + 2 NADH + 2 H(+). Functionally, quinone reductase that provides resistance to thiol-specific stress caused by electrophilic quinones. Its function is as follows. Also exhibits azoreductase activity. Catalyzes the reductive cleavage of the azo bond in aromatic azo compounds to the corresponding amines. This Leptothrix cholodnii (strain ATCC 51168 / LMG 8142 / SP-6) (Leptothrix discophora (strain SP-6)) protein is FMN-dependent NADH:quinone oxidoreductase.